We begin with the raw amino-acid sequence, 2039 residues long: Calcium-channel protein CCH1 (2039 aa).

Disordered regions lie at residues 1 to 171 and 206 to 288; these read MQGR…PPRS and PQLK…PQKE. Over residues 64–80 the composition is skewed to basic and acidic residues; that stretch reads STEEKKGDEYNGNDKDS. Asparagine 98 carries N-linked (GlcNAc...) asparagine glycosylation. Low complexity-rich tracts occupy residues 122-132 and 147-164; these read SPSTKSAKSSS and FSSY…SPSS. Basic and acidic residues predominate over residues 209–226; sequence KSEKSRPVSDVGEDRGEG. N-linked (GlcNAc...) asparagine glycosylation is found at asparagine 257 and asparagine 269. Basic residues predominate over residues 271–281; that stretch reads SRKKPSPKFFH. Serine 284 carries the post-translational modification Phosphoserine. Residues 346–366 traverse the membrane as a helical segment; sequence YSLLYNTLLTFYAILLAIRTY. Asparagine 379 is a glycosylation site (N-linked (GlcNAc...) asparagine). Residues 384 to 404 form a helical membrane-spanning segment; that stretch reads FIFILSACFTGNDIAKIIAFG. Asparagine 559 is a glycosylation site (N-linked (GlcNAc...) asparagine). 3 helical membrane-spanning segments follow: residues 563-583, 658-678, and 691-711; these read MLVY…QGSF, IVNS…TDLM, and LFFI…LIAV. N-linked (GlcNAc...) asparagine glycans are attached at residues asparagine 754 and asparagine 760. A run of 3 helical transmembrane segments spans residues 766–786, 809–829, and 841–861; these read LAIY…DIGM, ISIV…PNMW, and FIIS…VLGH. 2 N-linked (GlcNAc...) asparagine glycosylation sites follow: asparagine 882 and asparagine 900. The next 2 helical transmembrane spans lie at 904–924 and 942–962; these read FYFF…EGVI and SFLS…LYAL. The N-linked (GlcNAc...) asparagine glycan is linked to asparagine 968. The helical transmembrane segment at 978 to 998 threads the bilayer; sequence FFIIWFLLSNSVILNIFIALI. A glycan (N-linked (GlcNAc...) asparagine) is linked at asparagine 1153. Residues 1207–1227 traverse the membrane as a helical segment; that stretch reads VFVFIFALATILLIVCSCYVT. N-linked (GlcNAc...) asparagine glycosylation occurs at asparagine 1240. The next 2 membrane-spanning stretches (helical) occupy residues 1247–1267 and 1277–1297; these read CAFI…DGFI and PWNF…IAYL. Asparagine 1302 carries N-linked (GlcNAc...) asparagine glycosylation. The next 2 helical transmembrane spans lie at 1340–1360 and 1408–1428; these read IFEA…WGLS and FASA…VDLL. Asparagine 1433 carries an N-linked (GlcNAc...) asparagine glycan. 5 consecutive transmembrane segments (helical) span residues 1452–1472, 1529–1549, 1554–1574, 1596–1616, and 1618–1638; these read FLVL…VSFI, NFYY…MLLS, PGNL…VFLI, IRLS…HVPA, and HYWF…FIIP. Asparagine 1640 is a glycosylation site (N-linked (GlcNAc...) asparagine). A helical membrane pass occupies residues 1654-1674; it reads LPPILSLTYTWGVLFLVYAIA. Residues asparagine 1687 and asparagine 1732 are each glycosylated (N-linked (GlcNAc...) asparagine). Residues 1748 to 1768 form a helical membrane-spanning segment; sequence LMSWNIISMYIFVNMFVSLII. N-linked (GlcNAc...) asparagine glycosylation is found at asparagine 1770 and asparagine 1785. In terms of domain architecture, EF-hand spans 1787-1822; the sequence is SEIKKYIEAWSKFDTDGTGELELSYLPRIMHSFDGP. Residues 2011–2039 are disordered; the sequence is PRMNQDSTMEPPEEPIDNNDDSANDLIDR. Residues 2021 to 2033 show a composition bias toward acidic residues; the sequence is PPEEPIDNNDDSA.

This sequence belongs to the calcium channel alpha-1 subunit (TC 1.A.1.11) family. As to quaternary structure, interacts with MID1 to form a Ca(2+) influx channel.

It localises to the cell membrane. Voltage-gated, high-affinity calcium channel that functions together with MID1 to mediate calcium entry into cells. Required during conditions of environmental stress. This chain is Calcium-channel protein CCH1 (CCH1), found in Saccharomyces cerevisiae (strain ATCC 204508 / S288c) (Baker's yeast).